The sequence spans 155 residues: 6,7-dimethyl-8-ribityllumazine synthase (155 aa).

5-amino-6-(D-ribitylamino)uracil contacts are provided by residues Phe22, 56 to 58, and 80 to 82; these read AFE and AVI. 85–86 is a (2S)-2-hydroxy-3-oxobutyl phosphate binding site; that stretch reads ST. His88 acts as the Proton donor in catalysis. Phe113 is a binding site for 5-amino-6-(D-ribitylamino)uracil. Residue Arg127 coordinates (2S)-2-hydroxy-3-oxobutyl phosphate.

Belongs to the DMRL synthase family.

It carries out the reaction (2S)-2-hydroxy-3-oxobutyl phosphate + 5-amino-6-(D-ribitylamino)uracil = 6,7-dimethyl-8-(1-D-ribityl)lumazine + phosphate + 2 H2O + H(+). It participates in cofactor biosynthesis; riboflavin biosynthesis; riboflavin from 2-hydroxy-3-oxobutyl phosphate and 5-amino-6-(D-ribitylamino)uracil: step 1/2. In terms of biological role, catalyzes the formation of 6,7-dimethyl-8-ribityllumazine by condensation of 5-amino-6-(D-ribitylamino)uracil with 3,4-dihydroxy-2-butanone 4-phosphate. This is the penultimate step in the biosynthesis of riboflavin. The chain is 6,7-dimethyl-8-ribityllumazine synthase from Bifidobacterium longum subsp. infantis (strain ATCC 15697 / DSM 20088 / JCM 1222 / NCTC 11817 / S12).